The primary structure comprises 510 residues: Light-independent protochlorophyllide reductase subunit B (510 aa).

Asp-36 is a [4Fe-4S] cluster binding site. The active-site Proton donor is the Asp-296. 431-432 (GM) provides a ligand contact to substrate.

The protein belongs to the ChlB/BchB/BchZ family. Protochlorophyllide reductase is composed of three subunits; ChlL, ChlN and ChlB. Forms a heterotetramer of two ChlB and two ChlN subunits. The cofactor is [4Fe-4S] cluster.

Its subcellular location is the plastid. The protein localises to the chloroplast. The catalysed reaction is chlorophyllide a + oxidized 2[4Fe-4S]-[ferredoxin] + 2 ADP + 2 phosphate = protochlorophyllide a + reduced 2[4Fe-4S]-[ferredoxin] + 2 ATP + 2 H2O. It functions in the pathway porphyrin-containing compound metabolism; chlorophyll biosynthesis (light-independent). Component of the dark-operative protochlorophyllide reductase (DPOR) that uses Mg-ATP and reduced ferredoxin to reduce ring D of protochlorophyllide (Pchlide) to form chlorophyllide a (Chlide). This reaction is light-independent. The NB-protein (ChlN-ChlB) is the catalytic component of the complex. The chain is Light-independent protochlorophyllide reductase subunit B from Stigeoclonium helveticum (Green alga).